Consider the following 272-residue polypeptide: NH(3)-dependent NAD(+) synthetase (272 aa).

45–52 (GISGGQDS) contributes to the ATP binding site. Position 51 (aspartate 51) interacts with Mg(2+). Arginine 138 serves as a coordination point for deamido-NAD(+). Threonine 158 contacts ATP. Residue glutamate 163 coordinates Mg(2+). The deamido-NAD(+) site is built by lysine 171 and aspartate 178. Positions 187 and 209 each coordinate ATP. 258-259 (HK) contributes to the deamido-NAD(+) binding site.

Belongs to the NAD synthetase family. Homodimer.

The catalysed reaction is deamido-NAD(+) + NH4(+) + ATP = AMP + diphosphate + NAD(+) + H(+). It participates in cofactor biosynthesis; NAD(+) biosynthesis; NAD(+) from deamido-NAD(+) (ammonia route): step 1/1. Catalyzes the ATP-dependent amidation of deamido-NAD to form NAD. Uses ammonia as a nitrogen source. The polypeptide is NH(3)-dependent NAD(+) synthetase (Bacillus mycoides (strain KBAB4) (Bacillus weihenstephanensis)).